The sequence spans 272 residues: tRNA pseudouridine synthase B (272 aa).

Asp-38 (nucleophile) is an active-site residue.

It belongs to the pseudouridine synthase TruB family. Type 1 subfamily.

The catalysed reaction is uridine(55) in tRNA = pseudouridine(55) in tRNA. In terms of biological role, responsible for synthesis of pseudouridine from uracil-55 in the psi GC loop of transfer RNAs. This chain is tRNA pseudouridine synthase B, found in Campylobacter jejuni (strain RM1221).